We begin with the raw amino-acid sequence, 188 residues long: Pyridoxal 5'-phosphate synthase subunit PdxT (188 aa).

47-49 (GES) is an L-glutamine binding site. Residue cysteine 79 is the Nucleophile of the active site. L-glutamine-binding positions include arginine 105 and 134 to 135 (IR). Residues histidine 170 and glutamate 172 each act as charge relay system in the active site.

It belongs to the glutaminase PdxT/SNO family. As to quaternary structure, in the presence of PdxS, forms a dodecamer of heterodimers. Only shows activity in the heterodimer.

It catalyses the reaction aldehydo-D-ribose 5-phosphate + D-glyceraldehyde 3-phosphate + L-glutamine = pyridoxal 5'-phosphate + L-glutamate + phosphate + 3 H2O + H(+). It carries out the reaction L-glutamine + H2O = L-glutamate + NH4(+). The protein operates within cofactor biosynthesis; pyridoxal 5'-phosphate biosynthesis. Its function is as follows. Catalyzes the hydrolysis of glutamine to glutamate and ammonia as part of the biosynthesis of pyridoxal 5'-phosphate. The resulting ammonia molecule is channeled to the active site of PdxS. The sequence is that of Pyridoxal 5'-phosphate synthase subunit PdxT from Listeria monocytogenes serotype 4b (strain F2365).